Consider the following 434-residue polypeptide: MIEKVYCSEVKPELEGKKVKLAGWVYSNMKVGKKIFLWIRDSTGIVQTVIAKNVVGEEVFEKAKKLGRESSVIVEGIVKADERAPGGAEVRVEKLEVIQAVSEFPIPENPEQASPELLLDYRHLHIRTPKASAIMKVKETLIMAAREWLLKDGWHEVFPPILVTGAVEGGATLFKLKYFDKYAYLSQSAQLYLEAAIFGLEKVWSLTPSFRAEKSRTRRHLTEFWHLELEAAWMDLWDIMKVEEELVSYMVQRTLELRKKEIEMFRDDLTTLKNTEPPFPRISYDEAIDILQSKGINVQWGDDLGADEERVLTEEFDRPFFVYGYPKQIKAFYMKEDPNDPRKVLAADMLAPEGYGEIIGGSQREDDYEKLLNRILEEGMDPKDYEWYLDLRKYGSVPHSGFGLGVERLVAWVLKLDHIRWASLFPRTPARLYP.

It belongs to the class-II aminoacyl-tRNA synthetase family.

It localises to the cytoplasm. The enzyme catalyses tRNA(Asn) + L-asparagine + ATP = L-asparaginyl-tRNA(Asn) + AMP + diphosphate + H(+). The sequence is that of Asparagine--tRNA ligase (asnS) from Pyrococcus furiosus (strain ATCC 43587 / DSM 3638 / JCM 8422 / Vc1).